The sequence spans 363 residues: G kinase-anchoring protein 1 (363 aa).

Residues 1–93 form an interaction with IRS1 region; sequence MASAVLSSVP…SHAICNAQHE (93 aa). Disordered stretches follow at residues 20–111 and 145–171; these read QVDS…NWQE and EYEN…HQGK. S23, S25, and S27 each carry phosphoserine. Polar residues predominate over residues 39–48; the sequence is TGKSQTNKST. Residues 43-75 adopt a coiled-coil conformation; sequence QTNKSTTNEKKREKRRKKKEQQQSEANELRNLA. A compositionally biased stretch (basic and acidic residues) spans 102-111; that stretch reads KDSREENWQE. A Phosphoserine; by PKG modification is found at S104. 2 coiled-coil regions span residues 126–158 and 240–350; these read ADLE…QSKV and EHNQ…YQGG.

This sequence belongs to the GKAP1 family. In terms of assembly, interacts with PRKG1 and IRS1.

The protein localises to the golgi apparatus. Its function is as follows. Regulates insulin-dependent IRS1 tyrosine phosphorylation in adipocytes by modulating the availability of IRS1 to IR tyrosine kinase. Its association with IRS1 is required for insulin-induced translocation of SLC2A4 to the cell membrane. Involved in TNF-induced impairment of insulin-dependent IRS1 tyrosine phosphorylation. The polypeptide is G kinase-anchoring protein 1 (GKAP1) (Bos taurus (Bovine)).